The following is a 561-amino-acid chain: Putative transport protein YbjL (561 aa).

5 consecutive transmembrane segments (helical) span residues 8–28 (LLNG…LCLG), 32–52 (LGSV…LLGQ), 66–86 (FMLF…SIFF), 94–114 (MLAL…GKLF), and 158–178 (NLSL…IVGA). RCK C-terminal domains follow at residues 200–288 (RGLD…SFRN) and 292–373 (VFDR…RIGF). 5 helical membrane-spanning segments follow: residues 383–403 (LLAF…TFQF), 406–426 (FSFG…LGFL), 447–467 (FGLM…ISNG), 475–495 (MLIA…LFGA), and 540–560 (AIAN…WPGL).

It belongs to the AAE transporter (TC 2.A.81) family. YbjL subfamily.

The protein localises to the cell membrane. The protein is Putative transport protein YbjL of Salmonella dublin (strain CT_02021853).